The chain runs to 169 residues: Lipoprotein signal peptidase (169 aa).

3 helical membrane passes run 1 to 21, 68 to 88, and 94 to 114; these read MPES…LILV, WQRW…VVWL, and HETL…GNLY. Catalysis depends on residues Asp124 and Asp143. Residues 135–155 traverse the membrane as a helical segment; that stretch reads FFPAFNLADTFITIGAILLAL.

This sequence belongs to the peptidase A8 family.

Its subcellular location is the cell inner membrane. It catalyses the reaction Release of signal peptides from bacterial membrane prolipoproteins. Hydrolyzes -Xaa-Yaa-Zaa-|-(S,diacylglyceryl)Cys-, in which Xaa is hydrophobic (preferably Leu), and Yaa (Ala or Ser) and Zaa (Gly or Ala) have small, neutral side chains.. It functions in the pathway protein modification; lipoprotein biosynthesis (signal peptide cleavage). In terms of biological role, this protein specifically catalyzes the removal of signal peptides from prolipoproteins. The chain is Lipoprotein signal peptidase from Ectopseudomonas mendocina (strain ymp) (Pseudomonas mendocina).